Here is a 289-residue protein sequence, read N- to C-terminus: Heme oxygenase 1 (289 aa).

The Cytoplasmic segment spans residues 1 to 266; sequence MERPQLDSMS…SQISTSSSQT (266 aa). Residues K18, H25, Y134, and R183 each coordinate heme b. Residues 225 to 261 are disordered; it reads HKDQSPSQTEFLRQRPASLVQDTTSAETPRGKSQIST. Residues S229 and S242 each carry the phosphoserine modification. Polar residues predominate over residues 244–261; that stretch reads VQDTTSAETPRGKSQIST. A helical; Anchor for type IV membrane protein transmembrane segment spans residues 267-289; that stretch reads PLLRWVLTLSFLLATVAVGIYAM.

This sequence belongs to the heme oxygenase family. Homodimer and higher order homooligomer. Oligomerization is crucial for its stability and function in the endoplasmic reticulum. Interacts with FLVCR2; this interaction is potentiated in the presence of heme. Post-translationally, a soluble form arises by proteolytic removal of the membrane anchor.

The protein resides in the endoplasmic reticulum membrane. It carries out the reaction heme b + 3 reduced [NADPH--hemoprotein reductase] + 3 O2 = biliverdin IXalpha + CO + Fe(2+) + 3 oxidized [NADPH--hemoprotein reductase] + 3 H2O + H(+). Its activity is regulated as follows. Inhibited by metalloporphyrins such as Sn- and Zn-protoporphyrins. In terms of biological role, catalyzes the oxidative cleavage of heme at the alpha-methene bridge carbon, released as carbon monoxide (CO), to generate biliverdin IXalpha, while releasing the central heme iron chelate as ferrous iron. Affords protection against programmed cell death and this cytoprotective effect relies on its ability to catabolize free heme and prevent it from sensitizing cells to undergo apoptosis. Catalyzes the oxidative cleavage of heme at the alpha-methene bridge carbon, released as carbon monoxide (CO), to generate biliverdin IXalpha, while releasing the central heme iron chelate as ferrous iron. In Rattus norvegicus (Rat), this protein is Heme oxygenase 1 (Hmox1).